We begin with the raw amino-acid sequence, 256 residues long: Small ribosomal subunit protein eS1 (256 aa).

Alanine 2 bears the N-acetylalanine; partial mark.

It belongs to the eukaryotic ribosomal protein eS1 family. In terms of assembly, component of the small ribosomal subunit. Mature ribosomes consist of a small (40S) and a large (60S) subunit. The 40S subunit contains about 33 different proteins and 1 molecule of RNA (18S). The 60S subunit contains about 49 different proteins and 3 molecules of RNA (25S, 5.8S and 5S).

It is found in the cytoplasm. The polypeptide is Small ribosomal subunit protein eS1 (Coprinopsis cinerea (strain Okayama-7 / 130 / ATCC MYA-4618 / FGSC 9003) (Inky cap fungus)).